The primary structure comprises 804 residues: Leucine--tRNA ligase (804 aa).

The 'HIGH' region motif lies at 40–51 (PYPSGAGLHVGH). The short motif at 576-580 (KMSKS) is the 'KMSKS' region element. Residue lysine 579 coordinates ATP.

This sequence belongs to the class-I aminoacyl-tRNA synthetase family.

Its subcellular location is the cytoplasm. The catalysed reaction is tRNA(Leu) + L-leucine + ATP = L-leucyl-tRNA(Leu) + AMP + diphosphate. This Staphylococcus epidermidis (strain ATCC 35984 / DSM 28319 / BCRC 17069 / CCUG 31568 / BM 3577 / RP62A) protein is Leucine--tRNA ligase.